The chain runs to 141 residues: ATP synthase epsilon chain 1 (141 aa).

The protein belongs to the ATPase epsilon chain family. F-type ATPases have 2 components, CF(1) - the catalytic core - and CF(0) - the membrane proton channel. CF(1) has five subunits: alpha(3), beta(3), gamma(1), delta(1), epsilon(1). CF(0) has three main subunits: a, b and c.

It is found in the cell inner membrane. Produces ATP from ADP in the presence of a proton gradient across the membrane. The sequence is that of ATP synthase epsilon chain 1 from Paraburkholderia xenovorans (strain LB400).